Reading from the N-terminus, the 1117-residue chain is Protein cup (1117 aa).

Residues 1–106 (MQMAEAEQEN…PPPPPPLPTS (106 aa)) are disordered. 2 stretches are compositionally biased toward pro residues: residues 54-64 (YPPPPPPPTPV) and 95-104 (CAPPPPPPLP). Residues Ser263 and Ser270 each carry the phosphoserine modification. The interval 270-326 (SPRKQVASKEAVPEQQSSQVQQKRPPSTGIHKPGSLRAPKAVRPTTAPVVSSKPVKS) is disordered. Residues 283–294 (EQQSSQVQQKRP) show a composition bias toward polar residues. The YXXXXLphi motif 1 signature appears at 327–333 (YTRSRLM). A phosphoserine mark is found at Ser347 and Ser350. Residues 363–369 (ELEGRLR) carry the YXXXXLphi motif 2 motif. Disordered stretches follow at residues 493–528 (ISSQPQRRPNTPVMGMSINRSENDTLHSNESSEDLS), 596–618 (KEGNKNHGLGETERETSKQKMDH), 654–673 (TEHQQQKEEKRPGSGRSFQF), 679–728 (SQQN…SSSS), 984–1004 (GAKHQAQQQYLNRGQQRQARP), and 1016–1051 (ISGGGNNHASGYPMNGQPQKHHSNLRFGDNQNFQSF). At Thr503 the chain carries Phosphothreonine. A phosphoserine mark is found at Ser509, Ser513, Ser520, Ser523, and Ser524. Composition is skewed to low complexity over residues 679 to 712 (SQQNYESSSYVNHQQPPQTQPQQMQQQSNTNTNN) and 988 to 1001 (QAQQQYLNRGQQRQ).

Belongs to the 4E-T/EIF4E-T family. In terms of assembly, component of the osk RNP complex, which is composed of at least exu, yps, aret/bruno, cup, and the mRNA of osk. Interacts with the decapping activators me31B and tral. Component of the nanos RNP complex, which is composed of at least smg, cup, tral, me31B, the CCR4-NOT complex members Rga/NOT2 and Caf1, and the mRNA of nanos (nos). Interacts with btz. Recruited to the 3'-UTR of nos and osk mRNAs by smg and btz, respectively. Forms a ribonucleoprotein complex (RNP) containing at least me31B, eIF4E1, cup, tral and pAbp; this interaction is required for the translational silencing of maternal mRNAs during the maternal-to-zygotic transition. No interaction was detected with pAbp in 1-5 hour embryos. Interacts with osk and vas. Interacts with Pop2, twin/CCR4, Rga, Not3 and Not1 which are all core components of the CCR4-NOT deadenylase complex; interaction with the complex is required for cup deadenylation activity. Interacts with nanos. Interacts with smg. Interacts (via YXXXXLphi motifs) with eIF4E1; the interaction promotes retention of cup in the cytoplasm. Interacts with orb; the interaction represses the orb positive autoregulatory loop. Interacts with Nup154. Predominantly expressed in ovaries and in 0-2 hours old embryos. Weakly expressed in testis. Expressed in young embryos through stage 9, then it decreases throughout the rest of embryogenesis. In ovaries, it is expressed in germ cells throughout pre-vitellogenic development, but is not expressed in the somatic follicle cells. In germarial cysts, the protein (and not the transcripts) is transported selectively into the oocyte.

The protein localises to the cytoplasm. Its subcellular location is the nucleus. It localises to the cytoplasmic ribonucleoprotein granule. Adapter protein that plays a central role in localization of transcripts in the oocyte and in young embryos. Maintains RNA targets in a repressed state by promoting their deadenylation and protects deadenylated mRNAs from further degradation. Binds to and recruits eIF-4E to the 3'-UTR of some mRNA targets which prevents interaction between eIF4E1 and eIF4G. This may contribute to translational repression but does not appear to be necessary for it to occur. Can promote translational repression independently of deadenylation and eIF4E1 binding. Required for correct localization of eIF4E1 in the developing oocyte. Required for translational repression of oskar (osk) mRNA. Also required for the translational repression of nanos (nos) mRNA. Promotes the accumulation of the germ plasm components osk, vas and stau at the posterior pole of the oocyte and is required for germ cell development. Represses orb positive autoregulatory activity which prevents premature activation of orb and ensures its accumulation specifically in the developing oocyte. In 0-1 hour embryos, forms a complex with me31B, cup, tral and pAbp which binds to various mRNAs including maternal mRNAs, and down-regulates their expression during the maternal-to-zygotic transition. The chain is Protein cup (cup) from Drosophila melanogaster (Fruit fly).